Consider the following 255-residue polypeptide: Uridylate kinase (255 aa).

The tract at residues 1–21 is disordered; that stretch reads MSAAAAGRGERLNHAGNPGHR. Position 30–33 (30–33) interacts with ATP; sequence KLGG. G71 provides a ligand contact to UMP. Residues G72 and R76 each contribute to the ATP site. UMP is bound by residues D91 and 152–159; that span reads MGLPYFST. The ATP site is built by F185 and D188.

The protein belongs to the UMP kinase family. In terms of assembly, homohexamer.

The protein localises to the cytoplasm. It carries out the reaction UMP + ATP = UDP + ADP. Its pathway is pyrimidine metabolism; CTP biosynthesis via de novo pathway; UDP from UMP (UMPK route): step 1/1. Inhibited by UTP. In terms of biological role, catalyzes the reversible phosphorylation of UMP to UDP. The protein is Uridylate kinase of Mycobacterium leprae (strain TN).